We begin with the raw amino-acid sequence, 165 residues long: Phosphopantetheine adenylyltransferase (165 aa).

S10 lines the substrate pocket. Residues 10-11 and H18 each bind ATP; that span reads SF. Positions 42, 74, and 88 each coordinate substrate. ATP contacts are provided by residues 89–91, E99, and 124–130; these read GLR and WFYTSST.

It belongs to the bacterial CoaD family. Homohexamer. Mg(2+) serves as cofactor.

It is found in the cytoplasm. The catalysed reaction is (R)-4'-phosphopantetheine + ATP + H(+) = 3'-dephospho-CoA + diphosphate. It participates in cofactor biosynthesis; coenzyme A biosynthesis; CoA from (R)-pantothenate: step 4/5. In terms of biological role, reversibly transfers an adenylyl group from ATP to 4'-phosphopantetheine, yielding dephospho-CoA (dPCoA) and pyrophosphate. The sequence is that of Phosphopantetheine adenylyltransferase from Syntrophus aciditrophicus (strain SB).